We begin with the raw amino-acid sequence, 223 residues long: Glutathione S-transferase Z2 (223 aa).

Residues 10–91 form the GST N-terminal domain; that stretch reads AKLKLYSYWR…YLDDKYPEPP (82 aa). Residues 20-21, 20-25, glutamine 49, 49-50, 62-63, valine 63, 75-76, glutamine 115, and 119-121 each bind glutathione; these read SS, SSCAHR, QS, TV, DS, and NMA. The 126-residue stretch at 96–221 folds into the GST C-terminal domain; that stretch reads DYHKRAVNYQ…VPEKQPDTPS (126 aa).

Belongs to the GST superfamily. Zeta family.

It localises to the cytoplasm. The protein resides in the cytosol. The enzyme catalyses RX + glutathione = an S-substituted glutathione + a halide anion + H(+). Functionally, may be involved in the conjugation of reduced glutathione to a wide number of exogenous and endogenous hydrophobic electrophiles and have a detoxification role against certain herbicides. This is Glutathione S-transferase Z2 (GSTZ2) from Arabidopsis thaliana (Mouse-ear cress).